We begin with the raw amino-acid sequence, 113 residues long: Small ribosomal subunit protein uS17 (113 aa).

This sequence belongs to the universal ribosomal protein uS17 family. In terms of assembly, part of the 30S ribosomal subunit.

Its function is as follows. One of the primary rRNA binding proteins, it binds specifically to the 5'-end of 16S ribosomal RNA. The polypeptide is Small ribosomal subunit protein uS17 (Pyrococcus abyssi (strain GE5 / Orsay)).